Consider the following 312-residue polypeptide: tRNA pseudouridine synthase B (312 aa).

The active-site Nucleophile is the D46. Residues Y74, Y177, and L198 each coordinate substrate.

The protein belongs to the pseudouridine synthase TruB family. Type 1 subfamily.

The enzyme catalyses uridine(55) in tRNA = pseudouridine(55) in tRNA. In terms of biological role, responsible for synthesis of pseudouridine from uracil-55 in the psi GC loop of transfer RNAs. The sequence is that of tRNA pseudouridine synthase B from Buchnera aphidicola subsp. Acyrthosiphon pisum (strain APS) (Acyrthosiphon pisum symbiotic bacterium).